A 918-amino-acid polypeptide reads, in one-letter code: Plasma membrane ATPase 1 (918 aa).

Positions 1–18 are enriched in low complexity; it reads MTDTSSSSSSSSASSVSA. The interval 1–84 is disordered; the sequence is MTDTSSSSSS…VPEEYLQTDP (84 aa). The Cytoplasmic segment spans residues 1–115; sequence MTDTSSSSSS…ADEKESLVVK (115 aa). Residues 33–47 are compositionally biased toward acidic residues; that stretch reads AASESSDDDDIDALI. Position 61 is a phosphoserine (Ser61). A helical membrane pass occupies residues 116–136; sequence FVMFFVGPIQFVMEAAAILAA. At 137-140 the chain is on the extracellular side; it reads GLSD. Residues 141–160 traverse the membrane as a helical segment; the sequence is WVDFGVICGLLMLNAGVGFV. The Cytoplasmic portion of the chain corresponds to 161-291; it reads QEFQAGSIVD…GQGHFTEVLN (131 aa). Thr175 carries the phosphothreonine modification. Lys252 participates in a covalent cross-link: Glycyl lysine isopeptide (Lys-Gly) (interchain with G-Cter in ubiquitin). A helical membrane pass occupies residues 292–313; the sequence is GIGIILLVLVIATLLLVWTACF. The Extracellular segment spans residues 314–325; sequence YRTNGIVRILRY. Residues 326 to 347 traverse the membrane as a helical segment; the sequence is TLGITIIGVPVGLPAVVTTTMA. Residues 348–719 lie on the Cytoplasmic side of the membrane; that stretch reads VGAAYLAKKQ…IAILDNSLDI (372 aa). Asp378 acts as the 4-aspartylphosphate intermediate in catalysis. Residue Lys555 forms a Glycyl lysine isopeptide (Lys-Gly) (interchain with G-Cter in ubiquitin) linkage. Mg(2+)-binding residues include Asp634 and Asp638. The helical transmembrane segment at 720–738 threads the bilayer; the sequence is DLIVFIAIFADVATLAIAY. Residues 739 to 754 are Extracellular-facing; that stretch reads DNAPYSPKPVKWNLPR. A helical membrane pass occupies residues 755 to 774; sequence LWGMSIILGIVLAIGSWITL. Residues 775 to 824 are Cytoplasmic-facing; that stretch reads TTMFLPKGGIIQNFGAMNGIMFLQISLTENWLIFITRAAGPFWSSIPSWQ. Residues 825 to 845 traverse the membrane as a helical segment; the sequence is LAGAVFAVDIIATMFTLFGWW. Residues 846–857 lie on the Extracellular side of the membrane; sequence SENWTDIVTVVR. The helical transmembrane segment at 858 to 874 threads the bilayer; sequence VWIWSIGIFCVLGGFYY. The Cytoplasmic segment spans residues 875–918; sequence EMSTSEAFDRLMNGKPMKEKKSTRSVEDFMAAMQRVSTQHEKET. The residue at position 911 (Ser911) is a Phosphoserine. Thr912 and Thr918 each carry phosphothreonine.

It belongs to the cation transport ATPase (P-type) (TC 3.A.3) family. Type IIIA subfamily. As to quaternary structure, interacts with its cargot receptor EXP1 for its transport within the cell and maturation. Phosphorylated on multiple Ser and Thr residues.

The protein resides in the cell membrane. It catalyses the reaction ATP + H2O + H(+)(in) = ADP + phosphate + 2 H(+)(out). Its function is as follows. The plasma membrane ATPase of plants and fungi is a hydrogen ion pump. The proton gradient it generates drives the active transport of nutrients by H(+)-symport. The resulting external acidification and/or internal alkinization may mediate growth responses. In Saccharomyces cerevisiae (strain ATCC 204508 / S288c) (Baker's yeast), this protein is Plasma membrane ATPase 1 (PMA1).